A 72-amino-acid chain; its full sequence is Translation initiation factor IF-1 (72 aa).

Positions methionine 1–lysine 72 constitute an S1-like domain.

This sequence belongs to the IF-1 family. In terms of assembly, component of the 30S ribosomal translation pre-initiation complex which assembles on the 30S ribosome in the order IF-2 and IF-3, IF-1 and N-formylmethionyl-tRNA(fMet); mRNA recruitment can occur at any time during PIC assembly.

The protein localises to the cytoplasm. In terms of biological role, one of the essential components for the initiation of protein synthesis. Stabilizes the binding of IF-2 and IF-3 on the 30S subunit to which N-formylmethionyl-tRNA(fMet) subsequently binds. Helps modulate mRNA selection, yielding the 30S pre-initiation complex (PIC). Upon addition of the 50S ribosomal subunit IF-1, IF-2 and IF-3 are released leaving the mature 70S translation initiation complex. This is Translation initiation factor IF-1 from Bifidobacterium adolescentis (strain ATCC 15703 / DSM 20083 / NCTC 11814 / E194a).